Consider the following 852-residue polypeptide: Bifunctional heparan sulfate N-deacetylase/N-sulfotransferase 1 (852 aa).

Residues 1–13 (MIITPYLNRKITR) are Cytoplasmic-facing. The helical; Signal-anchor for type II membrane protein transmembrane segment at 14–34 (PLKWILALIFLYLIYICLFSN) threads the bilayer. The heparan sulfate N-deacetylase 1 stretch occupies residues 34–574 (NNSKPPKPRK…PRHHAILPPS (541 aa)). Over 35–852 (NSKPPKPRKK…WLEESVRIRA (818 aa)) the chain is Lumenal. 7 N-linked (GlcNAc...) asparagine glycosylation sites follow: Asn-50, Asn-72, Asn-261, Asn-328, Asn-377, Asn-428, and Asn-576. Positions 575–852 (INCTKKSLPD…WLEESVRIRA (278 aa)) are heparan sulfate N-sulfotransferase 1. Catalysis depends on Lys-592, which acts as the For sulfotransferase activity. A 3'-phosphoadenylyl sulfate-binding site is contributed by 592-596 (KTGST). A glycan (N-linked (GlcNAc...) asparagine) is linked at Asn-607. Residue Ser-686 participates in 3'-phosphoadenylyl sulfate binding. An N-linked (GlcNAc...) asparagine glycan is attached at Asn-712. The cysteines at positions 789 and 798 are disulfide-linked. A 3'-phosphoadenylyl sulfate-binding site is contributed by 803 to 807 (KGRKY).

Belongs to the sulfotransferase 1 family. NDST subfamily. Monomer. As to expression, present in some specific neurons in head and tail regions and muscles.

The protein localises to the golgi apparatus membrane. The enzyme catalyses alpha-D-glucosaminyl-[heparan sulfate](n) + 3'-phosphoadenylyl sulfate = N-sulfo-alpha-D-glucosaminyl-[heparan sulfate](n) + adenosine 3',5'-bisphosphate + 2 H(+). It functions in the pathway glycan metabolism; heparan sulfate biosynthesis. The protein operates within glycan metabolism; heparin biosynthesis. Its function is as follows. Essential bifunctional enzyme that catalyzes both the N-deacetylation and the N-sulfation of glucosamine (GlcNAc) of the glycosaminoglycan in heparan sulfate. Modifies the GlcNAc-GlcA disaccharide repeating sugar backbone to make N-sulfated heparosan, a prerequisite substrate for later modifications in heparin biosynthesis. In Caenorhabditis elegans, this protein is Bifunctional heparan sulfate N-deacetylase/N-sulfotransferase 1 (hst-1).